Reading from the N-terminus, the 662-residue chain is Histidine decarboxylase (662 aa).

Positions 88 and 201 each coordinate substrate. Lys-312 is subject to N6-(pyridoxal phosphate)lysine. The segment at 489 to 518 (QPSPRAKNVIPPPPGTRGLSLESVSEGGDD) is disordered.

It belongs to the group II decarboxylase family. Homodimer. Pyridoxal 5'-phosphate serves as cofactor.

It catalyses the reaction L-histidine + H(+) = histamine + CO2. Its pathway is amine and polyamine biosynthesis; histamine biosynthesis; histamine from L-histidine: step 1/1. Catalyzes the biosynthesis of histamine from histidine. The polypeptide is Histidine decarboxylase (Hdc) (Mus musculus (Mouse)).